The following is a 238-amino-acid chain: Large ribosomal subunit protein uL2 (238 aa).

Residues 201 to 238 (PFGGGGRQHPGRPKTVSRNTPPGRKVGSIAARRTGVGH) are disordered.

This sequence belongs to the universal ribosomal protein uL2 family. Part of the 50S ribosomal subunit. Forms a bridge to the 30S subunit in the 70S ribosome.

One of the primary rRNA binding proteins. Required for association of the 30S and 50S subunits to form the 70S ribosome, for tRNA binding and peptide bond formation. It has been suggested to have peptidyltransferase activity; this is somewhat controversial. Makes several contacts with the 16S rRNA in the 70S ribosome. The protein is Large ribosomal subunit protein uL2 of Methanocella arvoryzae (strain DSM 22066 / NBRC 105507 / MRE50).